A 136-amino-acid polypeptide reads, in one-letter code: Heavy metal-associated isoprenylated plant protein 19 (136 aa).

An HMA domain is found at 13–77; it reads YMDVEFNVSM…LKKKTGKRVK (65 aa). Positions 24 and 27 each coordinate a metal cation. Cysteine 133 carries the cysteine methyl ester modification. Cysteine 133 carries S-farnesyl cysteine lipidation. Positions 134–136 are cleaved as a propeptide — removed in mature form; the sequence is SIS.

Belongs to the HIPP family.

Heavy-metal-binding protein. The protein is Heavy metal-associated isoprenylated plant protein 19 of Arabidopsis thaliana (Mouse-ear cress).